The primary structure comprises 529 residues: All-trans-zeta-carotene desaturase (529 aa).

An FAD-binding site is contributed by 12–45 (IVVGAGPGGLSAAINLAGQGFRVTVVEKDAVPGG).

The protein belongs to the carotenoid/retinoid oxidoreductase family. It depends on FAD as a cofactor.

It catalyses the reaction all-trans-zeta-carotene + 2 A = all-trans-lycopene + 2 AH2. Its pathway is carotenoid biosynthesis; lycopene biosynthesis. Dehydrogenates carotenes in the trans conformation: converts all-trans-zeta-carotene into all-trans-lycopene, one of the last dehydrogenation steps of lycopene biosynthesis. The polypeptide is All-trans-zeta-carotene desaturase (carC) (Myxococcus xanthus).